Consider the following 395-residue polypeptide: Fractalkine (395 aa).

The signal sequence occupies residues 1–24; the sequence is MAPSPLAWLLRLAAFFHLCTLLPG. The chemokine and involved in interaction with ITGAV:ITGB3 and ITGA4:ITGB1 stretch occupies residues 25–100; that stretch reads QHLGMTKCEI…HQAAALTKNG (76 aa). The Extracellular segment spans residues 25 to 336; it reads QHLGMTKCEI…TPVPDTQAAT (312 aa). 2 disulfide bridges follow: Cys32/Cys58 and Cys36/Cys74. Residues 101 to 336 are mucin-like stalk; the sequence is GKFEKRVDNV…TPVPDTQAAT (236 aa). Composition is skewed to polar residues over residues 148–172 and 201–210; these read ARGT…TSEA and AVYQSGSSSW. 2 disordered regions span residues 148–180 and 201–305; these read ARGT…LTAK and AVYQ…SGSQ. Residues 218 to 236 show a composition bias toward low complexity; sequence SPSTTAPSPQVSTTSPSTP. The chain crosses the membrane as a helical span at residues 337–357; that stretch reads RRQAVGLLAFLGLLFCLGVAM. Residues 358 to 395 are Cytoplasmic-facing; that stretch reads FAYQSLQGCPRKMAGEMVEGLRYVPRSCGSNSYVLVPV.

This sequence belongs to the intercrine delta family. As to quaternary structure, monomer. Forms a ternary complex with CX3CR1 and ITGAV:ITGB3 or ITGA4:ITGB1. Post-translationally, a soluble short 80 kDa form may be released by proteolytic cleavage from the long membrane-anchored form. As to expression, highest levels in brain. Lower levels in kidney, heart and lung. Also found in skeletal muscle and testis. Highly expressed in lesional smooth muscle cells, but not macrophages. Low levels of ABCD-3 mRNA were also found in anti-CD40-stimulated splenic B-cells, but not in resting B-cells. Also expressed in dendritic cells.

It localises to the cell membrane. It is found in the secreted. Functionally, chemokine that acts as a ligand for both CX3CR1 and integrins ITGAV:ITGB3 and ITGA4:ITGB1. The CX3CR1-CX3CL1 signaling exerts distinct functions in different tissue compartments, such as immune response, inflammation, cell adhesion and chemotaxis. Regulates leukocyte adhesion and migration processes at the endothelium. Can activate integrins in both a CX3CR1-dependent and CX3CR1-independent manner. In the presence of CX3CR1, activates integrins by binding to the classical ligand-binding site (site 1) in integrins. In the absence of CX3CR1, binds to a second site (site 2) in integrins which is distinct from site 1 and enhances the binding of other integrin ligands to site 1. In terms of biological role, the soluble form is chemotactic for T-cells and monocytes, but not for neutrophils. Its function is as follows. The membrane-bound form promotes adhesion of those leukocytes to endothelial cells. In Mus musculus (Mouse), this protein is Fractalkine.